We begin with the raw amino-acid sequence, 612 residues long: Zinc metalloproteinase-disintegrin-like berythractivase (612 aa).

A signal peptide spans 1–20 (MIQVLLVIICLEAFPYQGSS). Residues 21-187 (IILESGNVND…EPIKKASLLN (167 aa)) constitute a propeptide that is removed on maturation. The Peptidase M12B domain occupies 200-396 (KYVEFVVVLD…NRPQCLLNKP (197 aa)). Glutamate 203 provides a ligand contact to Ca(2+). Asparagine 260 carries an N-linked (GlcNAc...) asparagine glycan. Ca(2+) is bound at residue aspartate 287. 3 disulfide bridges follow: cysteine 311–cysteine 391, cysteine 351–cysteine 375, and cysteine 353–cysteine 358. Position 336 (histidine 336) interacts with Zn(2+). Residue glutamate 337 is part of the active site. Residues histidine 340 and histidine 346 each contribute to the Zn(2+) site. A glycan (N-linked (GlcNAc...) asparagine) is linked at asparagine 348. An N-linked (GlcNAc...) asparagine glycan is attached at asparagine 374. Ca(2+) is bound by residues cysteine 391, asparagine 394, valine 406, asparagine 409, leucine 411, glutamate 413, glutamate 416, and aspartate 419. The Disintegrin domain maps to 404–490 (PPVCGNELLE…DCPMDDFQRN (87 aa)). Cystine bridges form between cysteine 407/cysteine 436, cysteine 418/cysteine 431, cysteine 420/cysteine 426, cysteine 430/cysteine 453, cysteine 444/cysteine 450, cysteine 449/cysteine 475, cysteine 462/cysteine 482, cysteine 469/cysteine 501, cysteine 494/cysteine 506, cysteine 513/cysteine 563, cysteine 528/cysteine 574, cysteine 541/cysteine 551, cysteine 558/cysteine 600, and cysteine 594/cysteine 605. A glycan (N-linked (GlcNAc...) asparagine) is linked at asparagine 432. A D/ECD-tripeptide motif is present at residues 468–470 (DCD). Ca(2+) is bound by residues aspartate 470, leucine 471, glutamate 473, and aspartate 485.

It belongs to the venom metalloproteinase (M12B) family. P-III subfamily. P-IIIa sub-subfamily. As to quaternary structure, monomer. Requires Zn(2+) as cofactor. Post-translationally, highly glycosylated. In terms of tissue distribution, expressed by the venom gland.

It is found in the secreted. Inhibited by EDTA and o-phenanthroline. Not inhibited by PMSF, benzamidine, irreversible serine-proteinase inhibitors and cysteine proteinase inhibitor E-64. Its function is as follows. Potent activator of prothrombin (F2). Does not elicit any hemorrhagic response. Barely inhibits collagen-induced platelet aggregation. Binds neither collagen, nor the jararhagin monoclonal antibody MAJar3. Hydrolyzes the Aalpha-chain of fibrin and fibrinogen, without affecting the Bbeta- and gamma-chains. Is capable of triggering endothelial pro-inflammatory and procoagulant cell responses, but fails to trigger apoptosis. Induces von Willebrand factor release, and the expression of both ICAM1 and E-selectin (SELE) (without increase in VCAM1) in endothelial cells (HUVEC). Is also able to up-regulate the synthesis of the coagulation factor TF (F3). Enhances nitric oxide (NO) generation, prostacyclin production and interleukin-8 release. This Bothrops erythromelas (Caatinga lance head) protein is Zinc metalloproteinase-disintegrin-like berythractivase.